The chain runs to 24 residues: GFKDWIKGAAKKLIKTVASAIANQ.

In terms of tissue distribution, expressed by the skin glands.

The protein localises to the secreted. Antimicrobial peptide that shows higher potency against Gram-negative bacteria than against Gram-positive bacteria. Has a very week hemolytic activity. The protein is Ascaphin-7 of Ascaphus truei (Coastal tailed frog).